The following is a 264-amino-acid chain: Thymidylate synthase (264 aa).

Residue Arg-21 coordinates dUMP. His-51 serves as a coordination point for (6R)-5,10-methylene-5,6,7,8-tetrahydrofolate. 126–127 is a binding site for dUMP; that stretch reads RR. Cys-146 functions as the Nucleophile in the catalytic mechanism. Residues 166 to 169, Asn-177, and 207 to 209 contribute to the dUMP site; these read RSGD and HLY. Asp-169 is a (6R)-5,10-methylene-5,6,7,8-tetrahydrofolate binding site. Ala-263 provides a ligand contact to (6R)-5,10-methylene-5,6,7,8-tetrahydrofolate.

Belongs to the thymidylate synthase family. Bacterial-type ThyA subfamily. Homodimer.

It is found in the cytoplasm. It carries out the reaction dUMP + (6R)-5,10-methylene-5,6,7,8-tetrahydrofolate = 7,8-dihydrofolate + dTMP. It participates in pyrimidine metabolism; dTTP biosynthesis. Catalyzes the reductive methylation of 2'-deoxyuridine-5'-monophosphate (dUMP) to 2'-deoxythymidine-5'-monophosphate (dTMP) while utilizing 5,10-methylenetetrahydrofolate (mTHF) as the methyl donor and reductant in the reaction, yielding dihydrofolate (DHF) as a by-product. This enzymatic reaction provides an intracellular de novo source of dTMP, an essential precursor for DNA biosynthesis. The protein is Thymidylate synthase of Xanthomonas oryzae pv. oryzae (strain MAFF 311018).